Here is a 179-residue protein sequence, read N- to C-terminus: Large ribosomal subunit protein uL5 (179 aa).

It belongs to the universal ribosomal protein uL5 family. In terms of assembly, part of the 50S ribosomal subunit; part of the 5S rRNA/L5/L18/L25 subcomplex. Contacts the 5S rRNA and the P site tRNA. Forms a bridge to the 30S subunit in the 70S ribosome.

Its function is as follows. This is one of the proteins that bind and probably mediate the attachment of the 5S RNA into the large ribosomal subunit, where it forms part of the central protuberance. In the 70S ribosome it contacts protein S13 of the 30S subunit (bridge B1b), connecting the 2 subunits; this bridge is implicated in subunit movement. Contacts the P site tRNA; the 5S rRNA and some of its associated proteins might help stabilize positioning of ribosome-bound tRNAs. In Polaromonas naphthalenivorans (strain CJ2), this protein is Large ribosomal subunit protein uL5.